Consider the following 48-residue polypeptide: Small, acid-soluble spore protein O (48 aa).

Residues 1 to 23 (MTKRKANHVINGMNAAKSQGNGA) form a disordered region.

It belongs to the SspO family.

It localises to the spore core. The polypeptide is Small, acid-soluble spore protein O (Bacillus pumilus (strain SAFR-032)).